A 137-amino-acid polypeptide reads, in one-letter code: Small heat shock protein IbpA (137 aa).

The 110-residue stretch at 28–137 (TQSNGGYPPY…AMKPRRIEIK (110 aa)) folds into the sHSP domain.

It belongs to the small heat shock protein (HSP20) family. In terms of assembly, monomer. Forms homomultimers of about 100-150 subunits at optimal growth temperatures. Conformation changes to monomers at high temperatures or high ionic concentrations.

The protein resides in the cytoplasm. Its function is as follows. Associates with aggregated proteins, together with IbpB, to stabilize and protect them from irreversible denaturation and extensive proteolysis during heat shock and oxidative stress. Aggregated proteins bound to the IbpAB complex are more efficiently refolded and reactivated by the ATP-dependent chaperone systems ClpB and DnaK/DnaJ/GrpE. Its activity is ATP-independent. The protein is Small heat shock protein IbpA of Pectobacterium atrosepticum (strain SCRI 1043 / ATCC BAA-672) (Erwinia carotovora subsp. atroseptica).